The chain runs to 699 residues: Elongation factor G (699 aa).

Residues 8-283 (EHIRNIGICA…AVVDFLPSPI (276 aa)) form the tr-type G domain. Residues 17-24 (AHIDAGKT), 81-85 (DTPGH), and 135-138 (NKMD) contribute to the GTP site.

Belongs to the TRAFAC class translation factor GTPase superfamily. Classic translation factor GTPase family. EF-G/EF-2 subfamily.

The protein localises to the cytoplasm. In terms of biological role, catalyzes the GTP-dependent ribosomal translocation step during translation elongation. During this step, the ribosome changes from the pre-translocational (PRE) to the post-translocational (POST) state as the newly formed A-site-bound peptidyl-tRNA and P-site-bound deacylated tRNA move to the P and E sites, respectively. Catalyzes the coordinated movement of the two tRNA molecules, the mRNA and conformational changes in the ribosome. This chain is Elongation factor G, found in Rickettsia sibirica (strain ATCC VR-151 / 246).